The sequence spans 38 residues: Large ribosomal subunit protein bL36 (38 aa).

The protein belongs to the bacterial ribosomal protein bL36 family.

This is Large ribosomal subunit protein bL36 from Thermotoga maritima (strain ATCC 43589 / DSM 3109 / JCM 10099 / NBRC 100826 / MSB8).